We begin with the raw amino-acid sequence, 281 residues long: NAD kinase (281 aa).

Residue Asp-61 is the Proton acceptor of the active site. NAD(+)-binding positions include 61-62 (DG), 134-135 (ND), Arg-145, Asp-164, 175-180 (TAYSLS), and Gln-234.

It belongs to the NAD kinase family. A divalent metal cation is required as a cofactor.

Its subcellular location is the cytoplasm. The catalysed reaction is NAD(+) + ATP = ADP + NADP(+) + H(+). Its function is as follows. Involved in the regulation of the intracellular balance of NAD and NADP, and is a key enzyme in the biosynthesis of NADP. Catalyzes specifically the phosphorylation on 2'-hydroxyl of the adenosine moiety of NAD to yield NADP. The protein is NAD kinase of Clostridium botulinum (strain ATCC 19397 / Type A).